Reading from the N-terminus, the 941-residue chain is Translation initiation factor IF-2 (941 aa).

A compositionally biased stretch (basic and acidic residues) spans D170–K209. Disordered stretches follow at residues D170 to A228 and R252 to Q351. Low complexity predominate over residues A256–E269. Positions T271–S297 are enriched in basic and acidic residues. Polar residues predominate over residues K299–Q308. A tr-type G domain is found at P441–K610. The interval G450 to T457 is G1. Position 450–457 (G450–T457) interacts with GTP. Residues G475–H479 are G2. Positions D496–G499 are G3. GTP contacts are provided by residues D496–H500 and N550–D553. A G4 region spans residues N550 to D553. The segment at S586–K588 is G5.

This sequence belongs to the TRAFAC class translation factor GTPase superfamily. Classic translation factor GTPase family. IF-2 subfamily.

It is found in the cytoplasm. In terms of biological role, one of the essential components for the initiation of protein synthesis. Protects formylmethionyl-tRNA from spontaneous hydrolysis and promotes its binding to the 30S ribosomal subunits. Also involved in the hydrolysis of GTP during the formation of the 70S ribosomal complex. The polypeptide is Translation initiation factor IF-2 (Herminiimonas arsenicoxydans).